Here is a 245-residue protein sequence, read N- to C-terminus: 4-hydroxy-tetrahydrodipicolinate reductase (245 aa).

NAD(+) contacts are provided by residues 7–12 (GAKGKV), 75–77 (GTT), and 102–105 (APNF). The active-site Proton donor/acceptor is His-132. (S)-2,3,4,5-tetrahydrodipicolinate is bound at residue His-133. Lys-136 acts as the Proton donor in catalysis. Residue 142–143 (GT) participates in (S)-2,3,4,5-tetrahydrodipicolinate binding.

It belongs to the DapB family.

The protein localises to the cytoplasm. It carries out the reaction (S)-2,3,4,5-tetrahydrodipicolinate + NAD(+) + H2O = (2S,4S)-4-hydroxy-2,3,4,5-tetrahydrodipicolinate + NADH + H(+). It catalyses the reaction (S)-2,3,4,5-tetrahydrodipicolinate + NADP(+) + H2O = (2S,4S)-4-hydroxy-2,3,4,5-tetrahydrodipicolinate + NADPH + H(+). The protein operates within amino-acid biosynthesis; L-lysine biosynthesis via DAP pathway; (S)-tetrahydrodipicolinate from L-aspartate: step 4/4. Functionally, catalyzes the conversion of 4-hydroxy-tetrahydrodipicolinate (HTPA) to tetrahydrodipicolinate. The chain is 4-hydroxy-tetrahydrodipicolinate reductase from Mycobacterium ulcerans (strain Agy99).